We begin with the raw amino-acid sequence, 310 residues long: Glutaminase 1 (310 aa).

Substrate is bound by residues Ser66, Asn117, Glu161, Asn168, Tyr192, Tyr244, and Val262. The residue at position 294 (Lys294) is an N6-acetyllysine.

The protein belongs to the glutaminase family. In terms of assembly, homotetramer.

It catalyses the reaction L-glutamine + H2O = L-glutamate + NH4(+). The chain is Glutaminase 1 from Shigella flexneri.